Here is a 234-residue protein sequence, read N- to C-terminus: Cysteine proteinase inhibitor 6 (234 aa).

An N-terminal signal peptide occupies residues 1–24 (MMRSRFLLFIVFFSLSLFISSLIA). Position 2 is an N-acetylalanine (Met2). 2 Cystatin domains span residues 38–126 (GGVG…KPAS) and 145–215 (SGWR…FKVE). The Secondary area of contact motif lies at 82-86 (QVVAG). The segment at 133-154 (SSDLGCKQGEHESGWREVPGDD) is disordered. Over residues 140-154 (QGEHESGWREVPGDD) the composition is skewed to basic and acidic residues. Ser174 bears the Phosphoserine mark.

This sequence belongs to the cystatin family. Phytocystatin subfamily.

It is found in the secreted. In terms of biological role, specific inhibitor of cysteine proteinases. Probably involved in the regulation of endogenous processes and in defense against pests and pathogens. The sequence is that of Cysteine proteinase inhibitor 6 (CYS6) from Arabidopsis thaliana (Mouse-ear cress).